The sequence spans 198 residues: Glycerol-3-phosphate acyltransferase (198 aa).

Helical transmembrane passes span 10-30 (LIPILFASYLIGSIPFSWILV), 57-77 (GISFLVLLLDIFKSVLVILIL), 86-106 (IMYLTGFTVVLGHIFPVWFLF), 118-138 (VVLSINIKIFFLFIITWAVVF), and 160-180 (AVTENFNSSIFYIAMSIIVLI).

Belongs to the PlsY family. Probably interacts with PlsX.

It is found in the cell inner membrane. It catalyses the reaction an acyl phosphate + sn-glycerol 3-phosphate = a 1-acyl-sn-glycero-3-phosphate + phosphate. The protein operates within lipid metabolism; phospholipid metabolism. Its function is as follows. Catalyzes the transfer of an acyl group from acyl-phosphate (acyl-PO(4)) to glycerol-3-phosphate (G3P) to form lysophosphatidic acid (LPA). This enzyme utilizes acyl-phosphate as fatty acyl donor, but not acyl-CoA or acyl-ACP. This Anaplasma marginale (strain St. Maries) protein is Glycerol-3-phosphate acyltransferase.